A 601-amino-acid chain; its full sequence is Multidrug and toxin extrusion protein 2 (601 aa).

Residues 1–62 lie on the Cytoplasmic side of the membrane; the sequence is MNTAFAGFDE…PRGFWDEARA (62 aa). The chain crosses the membrane as a helical span at residues 63–83; it reads LFVLSGPLFLFQVLNFLTYVV. At 84 to 95 the chain is on the extracellular side; the sequence is GTVFCGHLGKVE. A helical membrane pass occupies residues 96–116; it reads LASVTLGVAFVNVCGVSVGAG. At 117 to 145 the chain is on the cytoplasmic side; that stretch reads LSSACDTLMSQSFGSPNKKHVGVILQRGS. Residues 146 to 166 form a helical membrane-spanning segment; sequence LILLLCCLPCWALFLNTQHIL. Residues 167-182 are Extracellular-facing; sequence LLFRQDPAVSRLTQDY. A helical transmembrane segment spans residues 183 to 203; the sequence is AMIFIPGLPAIFLYSLLAKYL. Residues 204–212 lie on the Cytoplasmic side of the membrane; it reads QNQGIVWPQ. A helical membrane pass occupies residues 213–233; sequence VLSGVVGNCVNGVANYALVSV. Over 234–241 the chain is Extracellular; it reads LNLGVRGS. Residues 242-262 form a helical membrane-spanning segment; sequence AYANTISQFVQAAFLFLHIVL. Topologically, residues 263 to 281 are cytoplasmic; it reads KKLHLETWEGWSSQCLRDW. Residues 282-301 form a helical membrane-spanning segment; that stretch reads GPFLSLAIPSMLMMCVEWWA. The Extracellular segment spans residues 302-320; the sequence is YEIGSFLMGLLGVVDLSGQ. A helical transmembrane segment spans residues 321–341; sequence AIIYEVATVVYMIPMGLGMAV. Residues 342–361 lie on the Cytoplasmic side of the membrane; that stretch reads CVRVGTALGAADTLQAKRSA. Residues 362–382 form a helical membrane-spanning segment; that stretch reads VSGLLCTAGTSLVVGTLLGLL. The Extracellular segment spans residues 383-402; it reads NSQLGYIFTSDEEVIALVNQ. The helical transmembrane segment at 403–423 threads the bilayer; the sequence is VLPIYIVFQLVEAVCCVFGGV. At 424 to 437 the chain is on the cytoplasmic side; sequence LRGTGKQAFGAIVN. The helical transmembrane segment at 438–458 threads the bilayer; that stretch reads AIMYYIVGLPLGIVLTFVVGM. A topological domain (extracellular) is located at residue R459. A helical membrane pass occupies residues 460–480; it reads IMGLWLGMLTCIFLAAVTFVV. Over 481–577 the chain is Cytoplasmic; it reads YAVQLDWKLA…LSVRQLLFRR (97 aa). A helical membrane pass occupies residues 578 to 598; the sequence is GAALAASVAVLMAGLLVRVLT. Over 599–601 the chain is Extracellular; that stretch reads TGY.

This sequence belongs to the multi antimicrobial extrusion (MATE) (TC 2.A.66.1) family. Expressed in renal cortical tissues.

Its subcellular location is the cell membrane. It is found in the apical cell membrane. It carries out the reaction thiamine(out) + H(+)(in) = thiamine(in) + H(+)(out). The enzyme catalyses estrone 3-sulfate(in) + H(+)(out) = estrone 3-sulfate(out) + H(+)(in). It catalyses the reaction creatinine(in) + H(+)(out) = creatinine(out) + H(+)(in). Functionally, multidrug efflux pump that functions as a H(+)/organic cation antiporter. Mediates the efflux of cationic compounds, such as the model cations, tetraethylammonium (TEA) and 1-methyl-4-phenylpyridinium (MPP+), the platinum-based drug oxaliplatin or weak bases that are positively charged at physiological pH, cimetidine or the antidiabetic drug metformin. Mediates the efflux of the endogenous compounds creatinine, thiamine and estrone-3-sulfate. Plays a physiological role in the excretion of drugs, toxins and endogenous metabolites through the kidney. The protein is Multidrug and toxin extrusion protein 2 (SLC47A2) of Oryctolagus cuniculus (Rabbit).